The primary structure comprises 872 residues: DNA polymerase 1 (872 aa).

This sequence belongs to the DNA polymerase type-B family.

The catalysed reaction is DNA(n) + a 2'-deoxyribonucleoside 5'-triphosphate = DNA(n+1) + diphosphate. The polypeptide is DNA polymerase 1 (pol-alpha) (Sulfurisphaera ohwakuensis).